A 221-amino-acid chain; its full sequence is Glutathione S-transferase Z1 (221 aa).

The 82-residue stretch at 7 to 88 (EKLKLYSYWR…YLDEKYPEPP (82 aa)) folds into the GST N-terminal domain. Glutathione-binding positions include 17-18 (SS), 17-22 (SSCAHR), Gln-46, 46-47 (QF), 59-60 (TV), Val-60, 72-73 (DS), Gln-112, and 116-118 (NLA). A GST C-terminal domain is found at 93–218 (DLHKRAVNYQ…LPEKQPDAPS (126 aa)).

Belongs to the GST superfamily. Zeta family. Homodimer.

It localises to the cytoplasm. The protein localises to the cytosol. It catalyses the reaction RX + glutathione = an S-substituted glutathione + a halide anion + H(+). Acts a maleylacetone isomerase. Also catalyzes the glutathione-dependent dehalogenation of dichloroacetic acid to glyoxylic acid. In vitro, possesses glutathione peroxidase activity toward cumene hydroperoxide and linoleic acid-13-hydroperoxide. The polypeptide is Glutathione S-transferase Z1 (GSTZ1) (Arabidopsis thaliana (Mouse-ear cress)).